The following is a 452-amino-acid chain: UDP-N-acetylmuramate--L-alanine ligase (452 aa).

Residue 119–125 (GAHGKTS) participates in ATP binding.

The protein belongs to the MurCDEF family.

It is found in the cytoplasm. It carries out the reaction UDP-N-acetyl-alpha-D-muramate + L-alanine + ATP = UDP-N-acetyl-alpha-D-muramoyl-L-alanine + ADP + phosphate + H(+). It participates in cell wall biogenesis; peptidoglycan biosynthesis. Cell wall formation. This chain is UDP-N-acetylmuramate--L-alanine ligase, found in Streptococcus mutans serotype c (strain ATCC 700610 / UA159).